A 464-amino-acid chain; its full sequence is Trigger factor (464 aa).

One can recognise a PPIase FKBP-type domain in the interval 162–243 (GDFISIDLSA…VGTVKERELP (82 aa)). The tract at residues 435 to 464 (ELFGNGEAETEEAASTDEAASDSTESEDQK) is disordered.

This sequence belongs to the FKBP-type PPIase family. Tig subfamily.

It localises to the cytoplasm. It carries out the reaction [protein]-peptidylproline (omega=180) = [protein]-peptidylproline (omega=0). In terms of biological role, involved in protein export. Acts as a chaperone by maintaining the newly synthesized protein in an open conformation. Functions as a peptidyl-prolyl cis-trans isomerase. This chain is Trigger factor, found in Rhodococcus jostii (strain RHA1).